A 91-amino-acid polypeptide reads, in one-letter code: Large ribosomal subunit protein bL27 (91 aa).

The disordered stretch occupies residues 1–25 (MAHKKGAASSNNGRDSESKRLGVKR).

Belongs to the bacterial ribosomal protein bL27 family.

In Corynebacterium kroppenstedtii (strain DSM 44385 / JCM 11950 / CIP 105744 / CCUG 35717), this protein is Large ribosomal subunit protein bL27.